An 87-amino-acid chain; its full sequence is Small ribosomal subunit protein uS17 (87 aa).

The protein belongs to the universal ribosomal protein uS17 family. Part of the 30S ribosomal subunit.

Functionally, one of the primary rRNA binding proteins, it binds specifically to the 5'-end of 16S ribosomal RNA. The protein is Small ribosomal subunit protein uS17 of Staphylococcus aureus (strain Mu3 / ATCC 700698).